Reading from the N-terminus, the 186-residue chain is dITP/XTP pyrophosphatase (186 aa).

Residue threonine 7–lysine 12 participates in substrate binding. Mg(2+) contacts are provided by glutamate 36 and aspartate 65. Aspartate 65 (proton acceptor) is an active-site residue. Residues serine 66, phenylalanine 140–aspartate 143, lysine 163, and histidine 168–arginine 169 each bind substrate.

This sequence belongs to the HAM1 NTPase family. In terms of assembly, homodimer. The cofactor is Mg(2+). Mn(2+) serves as cofactor.

The catalysed reaction is XTP + H2O = XMP + diphosphate + H(+). It catalyses the reaction dITP + H2O = dIMP + diphosphate + H(+). It carries out the reaction ITP + H2O = IMP + diphosphate + H(+). In terms of biological role, pyrophosphatase that catalyzes the hydrolysis of nucleoside triphosphates to their monophosphate derivatives, with a high preference for the non-canonical purine nucleotides XTP (xanthosine triphosphate), dITP (deoxyinosine triphosphate) and ITP. Seems to function as a house-cleaning enzyme that removes non-canonical purine nucleotides from the nucleotide pool, thus preventing their incorporation into DNA/RNA and avoiding chromosomal lesions. The protein is dITP/XTP pyrophosphatase of Pyrococcus horikoshii (strain ATCC 700860 / DSM 12428 / JCM 9974 / NBRC 100139 / OT-3).